The following is a 617-amino-acid chain: MAWGCFVVLLLLVAAPLRLGQHLHLKPGFQYSYDCGVQGMQLLVFPRPNQTIQFKVLDEFGNRFEVNNCSICYHWVISEAQKPAVFSADYKGCHVLEKQDGRFHLRVFIQAVLPNGRVDTAQDVTLICPKPDHILTPESYLAPPTTPQPFIPHTFALHPISGHTLAGSGHTGLTTLYPETHPTPAPPSSEPGPVGPTVPQSQWGTLGSWELTELDSIGTHLLQERCQVASGHIPCMVKGSSEEACQQAGCCYDNTKEMPCYYGNTVTLQCFRSGYFTLVMSQETALTHGVMLDNVHLAYAPNGCPPTQKTSAFVVFHVPLTLCGTAIQVVGKQLVYENQLVSNIEVQTGPQGSITRDGVFRLHVRCIFNASDFLPIRASIFSPQPPAPVTRSGPLRLELRIATDKTFSSYYQGSDYPLVRLLQEPVYIEVRLLQRTDPGLALMLHQCWATPSASPFEQPQWPILSDGCPFKGDNYRTQMVAADRATLPFWSHYQRFTIATFTLLDSSSQNALRGQVYFFCSASACHPVGSETCSTTCDSEIARHRRSSGHHNSTIRALDIVSSPGAVGFEDAPKLEPSGSTRNSGSRPLLWVLQLLALTLVLGDGVLVGLSWAWAWA.

The first 20 residues, 1–20 (MAWGCFVVLLLLVAAPLRLG), serve as a signal peptide directing secretion. Gln-21 carries the pyrrolidone carboxylic acid modification. Over 21-588 (QHLHLKPGFQ…GSTRNSGSRP (568 aa)) the chain is Extracellular. Asn-49 and Asn-68 each carry an N-linked (GlcNAc...) asparagine glycan. The disordered stretch occupies residues 179-198 (ETHPTPAPPSSEPGPVGPTV). The segment covering 181–196 (HPTPAPPSSEPGPVGP) has biased composition (pro residues). Positions 224–264 (ERCQVASGHIPCMVKGSSEEACQQAGCCYDNTKEMPCYYGN) constitute a P-type domain. 3 disulfide bridges follow: Cys-226-Cys-251, Cys-235-Cys-250, and Cys-245-Cys-260. Positions 269–540 (QCFRSGYFTL…ETCSTTCDSE (272 aa)) constitute a ZP domain. A glycan (N-linked (GlcNAc...) asparagine) is linked at Asn-369. An intrachain disulfide couples Cys-447 to Cys-468. Residues 545–617 (RRSSGHHNST…VGLSWAWAWA (73 aa)) constitute a propeptide, removed in mature form. Residues 589–609 (LLWVLQLLALTLVLGDGVLVG) traverse the membrane as a helical segment. Topologically, residues 610–617 (LSWAWAWA) are cytoplasmic.

This sequence belongs to the ZP domain family. ZPB subfamily. In terms of assembly, polymers of ZP2 and ZP3 organized into long filaments cross-linked by ZP1 homodimers. Interacts with ZP3. Post-translationally, proteolytically cleaved before the transmembrane segment to yield the secreted ectodomain incorporated in the zona pellucida. In terms of processing, O-glycosylated. In terms of tissue distribution, expressed in oocytes.

It localises to the zona pellucida. Its subcellular location is the cell membrane. Component of the zona pellucida, an extracellular matrix surrounding oocytes which mediates sperm binding, induction of the acrosome reaction and prevents post-fertilization polyspermy. The zona pellucida is composed of 3 to 4 glycoproteins, ZP1, ZP2, ZP3, and ZP4. ZP1 ensures the structural integrity of the zona pellucida. This Rattus norvegicus (Rat) protein is Zona pellucida sperm-binding protein 1 (Zp1).